Here is a 345-residue protein sequence, read N- to C-terminus: CRISPR-associated endonuclease Cas1 1 (345 aa).

A divalent metal cation-binding residues include Glu168, His239, and Glu254.

It belongs to the CRISPR-associated endonuclease Cas1 family. Forms a heterotetramer with a Cas2 homodimer. Homodimer. The cofactor is a divalent metal cation.

Functionally, CRISPR (clustered regularly interspaced short palindromic repeat), is an adaptive immune system that provides protection against mobile genetic elements (viruses, transposable elements and conjugative plasmids). CRISPR clusters contain sequences complementary to antecedent mobile elements and target invading nucleic acids. CRISPR clusters are transcribed and processed into CRISPR RNA (crRNA). Involved in the integration of spacer DNA into the CRISPR cassette. Acts as a dsDNA and ssRNA nuclease, binds to linear and circular dsDNA and linear ssRNA and ssDNA. This chain is CRISPR-associated endonuclease Cas1 1, found in Archaeoglobus fulgidus (strain ATCC 49558 / DSM 4304 / JCM 9628 / NBRC 100126 / VC-16).